The chain runs to 110 residues: UPF0060 membrane protein Dtpsy_1668 (110 aa).

The next 4 membrane-spanning stretches (helical) occupy residues 7-27, 33-53, 63-83, and 86-106; these read LALFLLTAVAEIVGCYLPWLW, SAWLLVPAAASLALFAWLLTL, AAYGGVYVAVALVWLWTVDGV, and GPWDWLGVSVTLCGMAIIAFA.

This sequence belongs to the UPF0060 family.

Its subcellular location is the cell inner membrane. This is UPF0060 membrane protein Dtpsy_1668 from Acidovorax ebreus (strain TPSY) (Diaphorobacter sp. (strain TPSY)).